A 1463-amino-acid polypeptide reads, in one-letter code: Probable ATP-dependent RNA helicase spindle-E (1463 aa).

The region spanning 131-296 (LKAIRENPVV…FKIPGPNSLF (166 aa)) is the Helicase ATP-binding domain. 144–151 (GMTGCGKT) contributes to the ATP binding site. Residues 243–246 (DEVH) carry the DEAH box motif. In terms of domain architecture, Helicase C-terminal spans 348-531 (VCDRFIDEFE…NVVLKTKLLD (184 aa)). One can recognise a Tudor domain in the interval 951-1016 (AFKQRDIVAA…QLRGTPLDMF (66 aa)).

Belongs to the DEAD box helicase family. DEAH subfamily.

It localises to the cytoplasm. It carries out the reaction ATP + H2O = ADP + phosphate + H(+). Its function is as follows. Probable ATP-binding RNA helicase which plays a central role during gametogenesis by repressing transposable elements and preventing their mobilization, which is essential for the germline integrity. Acts via the piRNA metabolic process, which mediates the repression of transposable elements during meiosis by forming complexes composed of piRNAs and Piwi proteins and govern the methylation and subsequent repression of transposons. This is Probable ATP-dependent RNA helicase spindle-E (spn-E) from Anopheles gambiae (African malaria mosquito).